The chain runs to 356 residues: MKREQLIQNIEKLKHIMPSYVLEYYQSKLTIPYSLNTLYEYLKEYERFFSWLVDSGVADVDKITDVSLSVLENLTKRDLESFILYLRERPRLNTRSTRYGVSQTTINRTLSALSSLYKYLTEEVENEDGEPYFYRNVMKKVQTKKKSETLASRAENIKGKLFLGDETQGFLDYIDNEYEKTLSNRARSSFFKNKERDLAIIALILASGIRLSEAVNVDLRDLNLITMVVEVTRKGGKRDAVPYAPFAKTYFERYLEVRSQRYKTTAKDTAFFVTLYRDVPSRIDPSSVEKLVAKYSQAFKVRVTPHKLRHTLATRLYAQTNSQVLVSNQLGHASTQVTDLYTHIINEEQKNALDNL.

Residues 16 to 121 (IMPSYVLEYY…ALSSLYKYLT (106 aa)) form the Core-binding (CB) domain. The 186-residue stretch at 169–354 (GFLDYIDNEY…INEEQKNALD (186 aa)) folds into the Tyr recombinase domain. Active-site residues include Arg-210, Lys-234, His-306, Arg-309, and His-332. Catalysis depends on Tyr-341, which acts as the O-(3'-phospho-DNA)-tyrosine intermediate.

It belongs to the 'phage' integrase family. XerS subfamily.

It localises to the cytoplasm. FtsK is required for recombination. Its function is as follows. Site-specific tyrosine recombinase, which acts by catalyzing the cutting and rejoining of the recombining DNA molecules. Essential to convert dimers of the bacterial chromosome into monomers to permit their segregation at cell division. This Lactococcus lactis subsp. lactis (strain IL1403) (Streptococcus lactis) protein is Tyrosine recombinase XerS.